The sequence spans 181 residues: ADP-ribosylation factor 1 (181 aa).

Glycine 2 carries the N-myristoyl glycine lipid modification. GTP contacts are provided by residues 24–31, 67–71, and 126–129; these read GLDAAGKT, DVGGQ, and NKQD.

It belongs to the small GTPase superfamily. Arf family. As to quaternary structure, interacts with AGD7 and GDAP1. GDP-locked form interacts with cytosolic tail of p24 proteins. Interacts with AGD5 at trans-Golgi network. Interacts with A.tumefaciens AK6b.

The protein resides in the golgi apparatus. It is found in the endosome. The protein localises to the trans-Golgi network. It localises to the early endosome. The catalysed reaction is GTP + H2O = GDP + phosphate + H(+). Activated by AGD7 and AGD10. In terms of biological role, GTP-binding protein involved in protein trafficking; required for the sequence-specific vacuolar sorting route to the lytic vacuole, for the ER-to-Golgi transport and for the Golgi-derived transport to the plasma membrane. Involved in the recruitment of COPI and GDAP1 to membranes. Required for recycling of PIN auxin transporters (e.g. PIN1 and PIN2) in a fungal toxin brefeldin A (BFA)-dependent manner. Involved in various auxin-dependent developmental processes. In Arabidopsis thaliana (Mouse-ear cress), this protein is ADP-ribosylation factor 1.